We begin with the raw amino-acid sequence, 44 residues long: Tachystatin-A1 (44 aa).

Intrachain disulfides connect Cys4–Cys24, Cys11–Cys29, and Cys23–Cys41.

As to expression, granular hemocytes, small secretory granules.

Its subcellular location is the secreted. In terms of biological role, exhibits stronger antimicrobial activity against the Gram-positive bacteria (S.aureus (IC(50) is 4.2 ug/ml)) and fungi (C.albicans (IC(50) is 3.0 ug/ml) and P.pastoris (IC(50) is 0.5 ug/ml)) than Gram-negative bacteria (E.coli (IC(50) is 25 ug/ml)). Binds to chitin (8.4 uM are required to obtain 50% of binding). Does not cause hemolysis on sheep erythrocytes. Has no blocking activity on the P-type calcium channel. The sequence is that of Tachystatin-A1 from Tachypleus tridentatus (Japanese horseshoe crab).